Consider the following 118-residue polypeptide: Non-specific lipid-transfer protein-like 1 (118 aa).

An SCP2 domain is found at 5 to 113 (SDVIFEEIKE…KLRTILDPKM (109 aa)).

The chain is Non-specific lipid-transfer protein-like 1 (nlt-1) from Caenorhabditis elegans.